Consider the following 379-residue polypeptide: Presenilin-associated rhomboid-like protein, mitochondrial (379 aa).

The transit peptide at 1-52 (MAWRGWAQRGWGCGQAWAASVGGRSCEELTAALTPPRLLGRRFNFFIQQKCG) directs the protein to the mitochondrion. The Mitochondrial matrix segment spans residues 53 to 101 (FRKAPRKVEPRRSDTGTSGEAYKRSALIPPVEETVFYPSPYPIRSLIKP). At Ser-65 the chain carries Phosphoserine. Position 69 is a phosphothreonine (Thr-69). Ser-70 bears the Phosphoserine mark. The helical transmembrane segment at 102-121 (LFFTVGFTGCAFGSAAIWQY) threads the bilayer. The Mitochondrial intermembrane portion of the chain corresponds to 122–167 (ESLKSRVQSYFDGIKADWLDSIRPQKEGDFRKEINKWWNNLSDGQR). The helical transmembrane segment at 168-187 (TVTGIIAANVLVFCLWRVPS) threads the bilayer. Residues 188-207 (LQRTMIRYFTSNPASKVLCS) are Mitochondrial matrix-facing. A helical transmembrane segment spans residues 208 to 230 (PMLLSTFSHFSLFHMAANMYVLW). The Mitochondrial intermembrane segment spans residues 231–244 (SFSSSIVNILGQEQ). The chain crosses the membrane as a helical span at residues 245–262 (FMAVYLSAGVISNFVSYV). The Mitochondrial matrix portion of the chain corresponds to 263–273 (GKVATGRYGPS). A helical membrane pass occupies residues 274–292 (LGASGAIMTVLAAVCTKIP). Catalysis depends on Ser-277, which acts as the Nucleophile. Topologically, residues 293–295 (EGR) are mitochondrial intermembrane. A helical membrane pass occupies residues 296 to 318 (LAIIFLPMFTFTAGNALKAIIAM). Residues 319–332 (DTAGMILGWKFFDH) lie on the Mitochondrial matrix side of the membrane. Residues 333-354 (AAHLGGALFGIWYVTYGHELIW) traverse the membrane as a helical segment. His-335 is an active-site residue. Over 355-379 (KNREPLVKIWHEIRTNGPKKGGGSK) the chain is Mitochondrial intermembrane.

It belongs to the peptidase S54 family. As to quaternary structure, interacts with PSEN1 and PSEN2. Binds OPA1. Post-translationally, P-beta is proteolytically processed (beta-cleavage) in a PARL-dependent manner.

The protein resides in the mitochondrion inner membrane. The protein localises to the nucleus. The catalysed reaction is Cleaves type-1 transmembrane domains using a catalytic dyad composed of serine and histidine that are contributed by different transmembrane domains.. Functionally, required for the control of apoptosis during postnatal growth. Essential for proteolytic processing of an antiapoptotic form of OPA1 which prevents the release of mitochondrial cytochrome c in response to intrinsic apoptotic signals. Required for the maturation of PINK1 into its 52kDa mature form after its cleavage by mitochondrial-processing peptidase (MPP). Promotes cleavage of serine/threonine-protein phosphatase PGAM5 in damaged mitochondria in response to loss of mitochondrial membrane potential. Mediates differential cleavage of PINK1 and PGAM5 depending on the health status of mitochondria, disassociating from PINK1 and associating with PGAM5 in response to mitochondrial membrane potential loss. Required for processing of CLPB into a form with higher protein disaggregase activity by removing an autoinhibitory N-terminal peptide. Promotes processing of DIABLO/SMAC in the mitochondrion which is required for DIABLO apoptotic activity. Also required for cleavage of STARD7 and TTC19. Promotes changes in mitochondria morphology regulated by phosphorylation of P-beta domain. This chain is Presenilin-associated rhomboid-like protein, mitochondrial (PARL), found in Pongo abelii (Sumatran orangutan).